A 29-amino-acid polypeptide reads, in one-letter code: GILDSLKNLAKNAAQILLNKASCKLSGQC.

A disulfide bridge connects residues cysteine 23 and cysteine 29.

As to expression, expressed by the skin glands.

Its subcellular location is the secreted. Antimicrobial peptide. The polypeptide is Brevinin-2Rd (Pelophylax ridibundus (Marsh frog)).